The chain runs to 206 residues: GCN5-like protein acetyltransferase Rv2170 (206 aa).

One can recognise an N-acetyltransferase domain in the interval 44-205; it reads EHIRRRGWQA…AFAILGRTLP (162 aa). Y176 (proton donor) is an active-site residue.

The protein belongs to the acetyltransferase family.

It carries out the reaction L-lysyl-[protein] + acetyl-CoA = N(6)-acetyl-L-lysyl-[protein] + CoA + H(+). The enzyme catalyses propanoyl-CoA + L-lysyl-[protein] = N(6)-propanoyl-L-lysyl-[protein] + CoA + H(+). It catalyses the reaction succinyl-CoA + L-lysyl-[protein] = N(6)-succinyl-L-lysyl-[protein] + CoA + H(+). Functionally, acetyltransferase involved in the post-translational regulation of the central metabolic enzyme isocitrate dehydrogenase 1 (ICDH-1) through lysine acetylation. Catalyzes the acetylation of ICDH-1 at Lys-30 and Lys-129, using acetyl-CoA as a donor, leading to a reduction of ICDH-1 enzyme activity. Can also use propionyl-CoA and succinyl-CoA as donors. Cannot act on the isocitrate dehydrogenase 2 (ICDH-2). Might play a role in regulating the TCA cycle and methylcitrate cycle when M.tuberculosis utilizes fatty acid as carbon source. In addition, it can acetylate the amino group of isoniazid (INH), one of the first-line drugs used for the treatment of tuberculosis, thereby canceling out the drug toxicity. Acts by catalyzing the transfer of an acetyl group from acetyl-CoA to INH. Following acetylation, INH is broken down into isonicotinic acid and acetylhydrazine. M.smegmatis and M.tuberculosis H37Ra strains overexpressing Rv2170 are resistant to INH. Has little or no acetyltransferase activity with other antibiotics such as streptomycin, neomycin, kanamycin, amikacin, apramycin and gentamicin. In Mycobacterium tuberculosis (strain ATCC 25618 / H37Rv), this protein is GCN5-like protein acetyltransferase Rv2170.